Here is a 205-residue protein sequence, read N- to C-terminus: Large ribosomal subunit protein bL25 (205 aa).

The disordered stretch occupies residues 180–205 (HEEVAEEAEETEGEDAEEAPAAEGEE). Residues 183 to 205 (VAEEAEETEGEDAEEAPAAEGEE) are compositionally biased toward acidic residues.

The protein belongs to the bacterial ribosomal protein bL25 family. CTC subfamily. In terms of assembly, part of the 50S ribosomal subunit; part of the 5S rRNA/L5/L18/L25 subcomplex. Contacts the 5S rRNA. Binds to the 5S rRNA independently of L5 and L18.

In terms of biological role, this is one of the proteins that binds to the 5S RNA in the ribosome where it forms part of the central protuberance. This Corynebacterium diphtheriae (strain ATCC 700971 / NCTC 13129 / Biotype gravis) protein is Large ribosomal subunit protein bL25.